A 380-amino-acid polypeptide reads, in one-letter code: tRNA-specific 2-thiouridylase MnmA (380 aa).

Residues 9–16 (GVSGGVDS) and methionine 35 each bind ATP. The segment at 94–96 (NPD) is interaction with target base in tRNA. Cysteine 99 functions as the Nucleophile in the catalytic mechanism. Cysteines 99 and 195 form a disulfide. Glycine 123 contacts ATP. An interaction with tRNA region spans residues 145–147 (KDQ). The active-site Cysteine persulfide intermediate is the cysteine 195. The segment at 308–309 (RY) is interaction with tRNA.

It belongs to the MnmA/TRMU family.

It localises to the cytoplasm. It catalyses the reaction S-sulfanyl-L-cysteinyl-[protein] + uridine(34) in tRNA + AH2 + ATP = 2-thiouridine(34) in tRNA + L-cysteinyl-[protein] + A + AMP + diphosphate + H(+). Its function is as follows. Catalyzes the 2-thiolation of uridine at the wobble position (U34) of tRNA, leading to the formation of s(2)U34. In Stenotrophomonas maltophilia (strain R551-3), this protein is tRNA-specific 2-thiouridylase MnmA.